The chain runs to 1307 residues: CRISPR-associated endonuclease Cas12a (1307 aa).

Residues 1–35 (MTQFEGFTNLYQVSKTLRFELIPQGKTLKHIQEQG) are WED-I (OBD-I). An REC1 (helical-I) region spans residues 36–320 (FIEEDKARND…SDRNTLSFIL (285 aa)). 47–51 (YKELK) provides a ligand contact to crRNA. Residues 74–106 (ENLSAAIDSYRKEKTEETRNALIEEQATYRNAI) adopt a coiled-coil conformation. CrRNA-binding positions include 175-176 (NR) and 307-310 (KQIL). The WED-II (helical-II) stretch occupies residues 321-526 (EEFKSDEEVI…ARNYATKKPY (206 aa)). The segment at 527–598 (SVEKFKLNFQ…GFDKMYYDYF (72 aa)) is WED-II (OBD-I). Positions 599–607 (PDAAKMIPK) form a DNA-binding region, PAM-binding on target DNA. Residues 599-718 (PDAAKMIPKC…EYYAELNPLL (120 aa)) form a PI (LHD) region. The tract at residues 719–884 (YHISFQRIAE…ITLNYQAANS (166 aa)) is WED-III (OBD-III). 752-761 (KGHHGKPNLH) contacts crRNA. Positions 780-783 (KLNG) form a DNA-binding region, target DNA. His800 acts as the For pre-crRNA processing in catalysis. Position 806–808 (806–808 (MLN)) interacts with crRNA. Active-site for pre-crRNA processing residues include Lys809 and Lys860. The interval 885-940 (PSKFNQRVNAYLKEHPETPIIGIDRGERNLIYITVIDSTGKILEQRSLNTIQQFDY) is ruvC-I. The active-site For DNase activity of RuvC domain is Asp908. The interval 941 to 957 (QKKLDNREKERVAARQA) is bridge helix. Residues 951 to 968 (RVAARQAWSVVGTIKDLK) constitute a DNA-binding region (target DNA). Residues 958–1066 (WSVVGTIKDL…TQSGFLFYVP (109 aa)) are ruvC-II. Residue Glu993 is the For DNase activity of RuvC domain of the active site. A DNA-binding region (target DNA) is located at residues 1051-1053 (SFA). Residues 1067–1262 (APYTSKIDPL…FQNPEWPMDA (196 aa)) are nuclease domain. Arg1226 functions as the For DNase activity of nuclease domain in the catalytic mechanism. Catalysis depends on Asp1263, which acts as the For DNase activity of RuvC domain. The tract at residues 1263-1307 (DANGAYHIALKGQLLLNHLKESKDLKLQNGISNQDWLAYIQELRN) is ruvC-III.

Belongs to the CRISPR-associated endonuclease Cas12a family. As to quaternary structure, monomer. Requires Mg(2+) as cofactor.

The enzyme catalyses Endonucleolytic cleavage to 5'-phosphodinucleotide and 5'-phosphooligonucleotide end-products.. It catalyses the reaction RNA = a 5'-hydroxy-ribonucleotide + n nucleoside-2',3'-cyclophosphates.. In terms of biological role, CRISPR (clustered regularly interspaced short palindromic repeat), is an adaptive immune system that provides protection against mobile genetic elements (viruses, transposable elements and conjugative plasmids). CRISPR clusters contain sequences complementary to antecedent mobile elements and target invading nucleic acids. CRISPR clusters are transcribed and processed into CRISPR RNA (crRNA). Recognizes a short motif in the CRISPR repeat sequences (the 5' PAM or protospacer adjacent motif, TTTN in this organism) to help distinguish self versus nonself, as targets within the bacterial CRISPR locus do not have PAMs. Has dsDNA endonuclease activity, results in staggered 4-base 5' overhangs 19 and 22 bases downstream of the PAM on the non-targeted and targeted strand respectively. Non-target strand cleavage by the RuvC domain is probably a prerequisite of target strand cleavage by the Nuc domain. Protects E.coli against plasmids and bacteriophage M13mp18, phage T4 with hydroxymethyl or unmodified (but not glycosylated) cytosines and to a lesser extent against lambda and VpaE1 phage. In this CRISPR system correct processing of pre-crRNA requires only this protein and the CRISPR locus. This is CRISPR-associated endonuclease Cas12a from Acidaminococcus sp. (strain BV3L6).